The chain runs to 286 residues: Thymidylate synthase (286 aa).

Arg-27 contributes to the dUMP binding site. His-57 is a binding site for (6R)-5,10-methylene-5,6,7,8-tetrahydrofolate. Residue 148-149 coordinates dUMP; that stretch reads RR. Cys-168 functions as the Nucleophile in the catalytic mechanism. DUMP is bound by residues 188-191, Asn-199, and 229-231; these read RSAD and HLY. Asp-191 contacts (6R)-5,10-methylene-5,6,7,8-tetrahydrofolate. Ala-285 lines the (6R)-5,10-methylene-5,6,7,8-tetrahydrofolate pocket.

Belongs to the thymidylate synthase family. Bacterial-type ThyA subfamily. In terms of assembly, homodimer.

It localises to the cytoplasm. It carries out the reaction dUMP + (6R)-5,10-methylene-5,6,7,8-tetrahydrofolate = 7,8-dihydrofolate + dTMP. Its pathway is pyrimidine metabolism; dTTP biosynthesis. In terms of biological role, catalyzes the reductive methylation of 2'-deoxyuridine-5'-monophosphate (dUMP) to 2'-deoxythymidine-5'-monophosphate (dTMP) while utilizing 5,10-methylenetetrahydrofolate (mTHF) as the methyl donor and reductant in the reaction, yielding dihydrofolate (DHF) as a by-product. This enzymatic reaction provides an intracellular de novo source of dTMP, an essential precursor for DNA biosynthesis. In Psychrobacter sp. (strain PRwf-1), this protein is Thymidylate synthase.